The following is a 235-amino-acid chain: DnaA regulatory inactivator Hda (235 aa).

Belongs to the DnaA family. HdA subfamily. In terms of assembly, the active form seems to be an ADP-bound monomer. Forms the RIDA complex (regulatory inactivation of DnaA) of ATP-DnaA, ADP-Hda and the DNA-loaded beta sliding clamp (dnaN).

Functionally, mediates the interaction of DNA replication initiator protein DnaA with DNA polymerase subunit beta sliding clamp (dnaN). Stimulates hydrolysis of ATP-DnaA to ADP-DnaA, rendering DnaA inactive for reinitiation, a process called regulatory inhibition of DnaA or RIDA. The sequence is that of DnaA regulatory inactivator Hda from Yersinia pestis bv. Antiqua (strain Antiqua).